We begin with the raw amino-acid sequence, 382 residues long: GDP-mannose transporter 1 (382 aa).

Residues 1-40 (MADDKKTNEYTVEMDKLDHGNKNFEAPAPAVRPRGPPAAQ) are Cytoplasmic-facing. The chain crosses the membrane as a helical span at residues 41–61 (LANNPILPVLAYCGSSILMTV). The Lumenal segment spans residues 62–71 (MNKYVLSGTD). The helical transmembrane segment at 72 to 92 (FNLNFFLLCVQSIVCIVAIQT) threads the bilayer. The Cytoplasmic segment spans residues 93 to 110 (CKSSKLITYRDFNSDEAK). A helical membrane pass occupies residues 111–127 (KWFPITLLLIGMIYTGS). Residues 128 to 134 (KALQYLS) are Lumenal-facing. A helical membrane pass occupies residues 135–151 (IPVYTIFKNLTIILIAY). Residues 152-160 (GEVLWFGGS) lie on the Cytoplasmic side of the membrane. Residues 161 to 182 (VTGMTLFSFGLMVLSSIIAAWA) traverse the membrane as a helical segment. Topologically, residues 183 to 200 (DIKHAVESSGDATAKVST) are lumenal. Residues 201 to 221 (LNAGYIWMLINCLCTSSYVLG) form a helical membrane-spanning segment. The Cytoplasmic portion of the chain corresponds to 222–233 (MRKRIKLTNFKD). The helical transmembrane segment at 234–254 (FDTMFYNNLLSIPVLLVLTFL) threads the bilayer. At 255-274 (MEDWSSANIARNFPPADRNG) the chain is on the lumenal side. The chain crosses the membrane as a helical span at residues 275-295 (ILFAMILSGLSSVFISYTSAW). Residues 296–303 (CVRVTSST) lie on the Cytoplasmic side of the membrane. Residues 304 to 324 (TYSMVGALNKLPIALSGLIFF) traverse the membrane as a helical segment. Over 325–327 (DAP) the chain is Lumenal. The chain crosses the membrane as a helical span at residues 328–348 (VTFPSVSAIVVGFISGIVYAV). The Cytoplasmic portion of the chain corresponds to 349–382 (AKIKQSAKPKTGVLPMSNPPVSASSQSMRDSLRS). Residues 358 to 382 (KTGVLPMSNPPVSASSQSMRDSLRS) are disordered. The segment covering 367-382 (PPVSASSQSMRDSLRS) has biased composition (polar residues).

Belongs to the TPT transporter family. SLC35D subfamily. In terms of assembly, homooligomer.

It localises to the golgi apparatus membrane. Its subcellular location is the cytoplasmic vesicle membrane. The protein localises to the endoplasmic reticulum membrane. Functionally, involved in the import of GDP-mannose from the cytoplasm into the Golgi lumen. This chain is GDP-mannose transporter 1 (gmt1), found in Neosartorya fischeri (strain ATCC 1020 / DSM 3700 / CBS 544.65 / FGSC A1164 / JCM 1740 / NRRL 181 / WB 181) (Aspergillus fischerianus).